We begin with the raw amino-acid sequence, 275 residues long: Diaminopimelate epimerase (275 aa).

Residues Asn-12, Gln-45, and Asn-65 each coordinate substrate. The active-site Proton donor is the Cys-74. Substrate is bound by residues 75–76, Asn-158, Asn-191, and 209–210; these read GN and ER. Cys-218 (proton acceptor) is an active-site residue. 219–220 is a binding site for substrate; sequence GT.

This sequence belongs to the diaminopimelate epimerase family. In terms of assembly, homodimer.

The protein localises to the cytoplasm. It carries out the reaction (2S,6S)-2,6-diaminopimelate = meso-2,6-diaminopimelate. Its pathway is amino-acid biosynthesis; L-lysine biosynthesis via DAP pathway; DL-2,6-diaminopimelate from LL-2,6-diaminopimelate: step 1/1. Its function is as follows. Catalyzes the stereoinversion of LL-2,6-diaminopimelate (L,L-DAP) to meso-diaminopimelate (meso-DAP), a precursor of L-lysine and an essential component of the bacterial peptidoglycan. The chain is Diaminopimelate epimerase from Shewanella putrefaciens (strain CN-32 / ATCC BAA-453).